A 234-amino-acid polypeptide reads, in one-letter code: Large ribosomal subunit protein uL1 (234 aa).

It belongs to the universal ribosomal protein uL1 family. In terms of assembly, part of the 50S ribosomal subunit.

In terms of biological role, binds directly to 23S rRNA. The L1 stalk is quite mobile in the ribosome, and is involved in E site tRNA release. Functionally, protein L1 is also a translational repressor protein, it controls the translation of the L11 operon by binding to its mRNA. The chain is Large ribosomal subunit protein uL1 from Pseudoalteromonas translucida (strain TAC 125).